The sequence spans 1045 residues: Septation initiation network scaffold protein cdc11 (1045 aa).

Residues 1-11 (MEQLWLEHDLS) are compositionally biased toward basic and acidic residues. Disordered regions lie at residues 1–269 (MEQL…NTKD) and 282–329 (RGRM…PSLS). The segment covering 18–39 (PQEQGSDNSSEPPTTSNVNNTQ) has biased composition (polar residues). 3 stretches are compositionally biased toward low complexity: residues 40-52 (STGRGSSGTSTEH), 96-132 (KQSPPSKSPTKNPSKKSSNNSSRRSSSSVGKLSNVSN), and 152-165 (ISSSQFSKKYSEGS). Polar residues predominate over residues 166 to 176 (LKSQQSNTRSN). The segment covering 187–201 (ASNASSSSSVVSSPS) has biased composition (low complexity). Polar residues-rich tracts occupy residues 226–238 (NQLTQDVKSNSFE) and 320–329 (DSSNAFPSLS). S360 is subject to Phosphoserine. The interval 377–417 (DVGSSQSSSKTARLNSSPKSTLKTSSVKTRRSHSAQSSRKV) is disordered. Residues 379-403 (GSSQSSSKTARLNSSPKSTLKTSSV) show a composition bias toward polar residues. S558 carries the post-translational modification Phosphoserine. 15 LRR repeats span residues 604–625 (RIIQLDISRRHLDSLIGLSELC), 627–646 (SIEELTLEGNEIAYLTGCPV), 647–668 (TIRDLNAVENRLSSLTSFSNLL), 669–690 (NLQYLDISYNQLEDLTGLSSLI), 691–712 (HLRELKVDSNHLWSLDGIQHLD), 713–734 (GLLKLSACNNRIKELSFTNSNL), 736–757 (RLEELLLGNNEIEEIEEISSLQ), 758–779 (NLMVLQLDNNKLTNLKASQPMI), 780–801 (HLRILRISNNAIHQLEVDQFPH), 802–822 (LRTLYMDLNRFNRPPDIRRLK), 846–867 (DIRNLYLSNNTFVTLDCKHMFL), 868–889 (GVRYLELANVQLKEVPKYIATS), 892–913 (NLRVLDLSHNYISDIESLKPLQ), 914–935 (MIHRLYLVGNRIKKMRNLCDIL), and 940–962 (QLNVLDLRMNPLNFNIYPVIDDS). Residues 1005-1043 (AWRTRRKMYAEAILLACPHLEWLDGSDVSQSSRAAFTKS) form the LRRCT domain.

In terms of assembly, interacts with sid4. When hyperphosphorylated, interacts with byr4. Also interacts with spg1, sid2, cdc13 and cdc16. Phosphorylated by cdc7 and cdk1. Hyperphosphorylated during anaphase. Dephosphorylated by par1.

The protein localises to the cytoplasm. Its subcellular location is the cytoskeleton. It localises to the microtubule organizing center. The protein resides in the spindle pole body. In terms of biological role, essential for the onset of septum formation. Involved in the organization of astral microtubules during mitosis. Acts as a bridge between sid4 and the other SIN proteins mediating their association with the spindle pole body (SPB). The sid4-cdc11 complex organizes a signaling hub on the SPB which coordinates cell and nuclear division. This chain is Septation initiation network scaffold protein cdc11 (cdc11), found in Schizosaccharomyces pombe (strain 972 / ATCC 24843) (Fission yeast).